The following is a 293-amino-acid chain: Protein PET54 (293 aa).

The protein localises to the mitochondrion inner membrane. Activator of specific mitochondrial mRNAs. PET54 is involved in the excision of intron aI5-beta from pre-mRNA for cytochrome c oxidase I (COX1) and plays a role in promoting the translation of COX3. In Saccharomyces cerevisiae (strain ATCC 204508 / S288c) (Baker's yeast), this protein is Protein PET54 (PET54).